The sequence spans 318 residues: Basic leucine zipper (bZIP) transcription factor atfB (318 aa).

The interval 114-157 (FNSSPPEYAPPKHRSSLSEQSQTDGYGVSTRRRKASAIDQCEQQ) is disordered. The segment at 160 to 199 (REKREKFLERNRLAASKCRQKKKEHTKLLETRFREVSNKK) is basic motif. A bZIP domain is found at 160–223 (REKREKFLER…LNLKNEMLRH (64 aa)). The tract at residues 202–216 (LESEIEHLRSEVLNL) is leucine-zipper. The segment at 275–301 (DGPMQLPSEMGSPLDQRRDSEQSIMTE) is disordered.

Belongs to the bZIP family. ATF subfamily.

It is found in the nucleus. Its function is as follows. Transcription factor that acts as a key player in the regulatory circuit that integrates secondary metabolism and cellular response to oxidative stress. Regulates the genes involved in development and stress response through direct binding to their promoters. Particularly involved in the resistance to oxidative stress in asexual conidiospores. In Aspergillus oryzae (strain ATCC 42149 / RIB 40) (Yellow koji mold), this protein is Basic leucine zipper (bZIP) transcription factor atfB.